The chain runs to 300 residues: GTPase Era (300 aa).

Residues 4–172 (KSGFVALAGK…LEKIKEELPE (169 aa)) form the Era-type G domain. The tract at residues 12–19 (GKPNVGKS) is G1. GTP is bound at residue 12–19 (GKPNVGKS). The G2 stretch occupies residues 38-42 (QTTRN). The G3 stretch occupies residues 59-62 (DTPG). Residues 59–63 (DTPGI) and 121–124 (NKID) each bind GTP. The G4 stretch occupies residues 121-124 (NKID). Positions 151-153 (ISA) are G5. The region spanning 195–280 (IREKIFHLTR…YLDLNVKVKE (86 aa)) is the KH type-2 domain.

Belongs to the TRAFAC class TrmE-Era-EngA-EngB-Septin-like GTPase superfamily. Era GTPase family. As to quaternary structure, monomer.

The protein resides in the cytoplasm. It localises to the cell inner membrane. Its function is as follows. An essential GTPase that binds both GDP and GTP, with rapid nucleotide exchange. Plays a role in 16S rRNA processing and 30S ribosomal subunit biogenesis and possibly also in cell cycle regulation and energy metabolism. The chain is GTPase Era from Thermotoga maritima (strain ATCC 43589 / DSM 3109 / JCM 10099 / NBRC 100826 / MSB8).